The primary structure comprises 666 residues: LEAF RUST 10 DISEASE-RESISTANCE LOCUS RECEPTOR-LIKE PROTEIN KINASE-like 2.5 (666 aa).

Residues 1-30 form the signal peptide; sequence MINFSLSLTKSMSYSFIWMLFVIHISCVLS. At 31-275 the chain is on the extracellular side; it reads ADGNHILCSP…PTRNKVILKL (245 aa). Asparagine 119, asparagine 141, asparagine 171, and asparagine 198 each carry an N-linked (GlcNAc...) asparagine glycan. Residues 276-296 traverse the membrane as a helical segment; the sequence is FFIVIYVLGIGAASFAMMGVI. At 297–666 the chain is on the cytoplasmic side; it reads LVVTCLNCLI…YTEICSINVA (370 aa). The 289-residue stretch at 348 to 636 folds into the Protein kinase domain; that stretch reads KSFAEVIGKG…ALEVPPRPVL (289 aa). Residues 354-362 and lysine 376 each bind ATP; that span reads IGKGGFGTV. Tyrosine 420 is modified (phosphotyrosine). Catalysis depends on aspartate 471, which acts as the Proton acceptor. Residues threonine 508 and threonine 511 each carry the phosphothreonine modification.

The protein belongs to the protein kinase superfamily. Ser/Thr protein kinase family.

The protein resides in the membrane. The enzyme catalyses L-seryl-[protein] + ATP = O-phospho-L-seryl-[protein] + ADP + H(+). It carries out the reaction L-threonyl-[protein] + ATP = O-phospho-L-threonyl-[protein] + ADP + H(+). This chain is LEAF RUST 10 DISEASE-RESISTANCE LOCUS RECEPTOR-LIKE PROTEIN KINASE-like 2.5, found in Arabidopsis thaliana (Mouse-ear cress).